Consider the following 347-residue polypeptide: Glycerol-1-phosphate dehydrogenase [NAD(P)+] (347 aa).

Residues 90–94 (GRPVD) and 112–115 (TAIS) contribute to the NAD(+) site. Substrate is bound at residue D117. S121 contacts NAD(+). D165 is a substrate binding site. Zn(2+) is bound by residues D165 and H245. H249 contributes to the substrate binding site. Position 262 (H262) interacts with Zn(2+).

This sequence belongs to the glycerol-1-phosphate dehydrogenase family. In terms of assembly, homodimer. The cofactor is Zn(2+).

It is found in the cytoplasm. The enzyme catalyses sn-glycerol 1-phosphate + NAD(+) = dihydroxyacetone phosphate + NADH + H(+). It carries out the reaction sn-glycerol 1-phosphate + NADP(+) = dihydroxyacetone phosphate + NADPH + H(+). Its pathway is membrane lipid metabolism; glycerophospholipid metabolism. Functionally, catalyzes the NAD(P)H-dependent reduction of dihydroxyacetonephosphate (DHAP or glycerone phosphate) to glycerol 1-phosphate (G1P). The G1P thus generated is used as the glycerophosphate backbone of phospholipids in the cellular membranes of Archaea. This chain is Glycerol-1-phosphate dehydrogenase [NAD(P)+], found in Thermofilum pendens (strain DSM 2475 / Hrk 5).